The following is a 123-amino-acid chain: Small ribosomal subunit protein uS12cz/uS12cy (123 aa).

This sequence belongs to the universal ribosomal protein uS12 family. Part of the 30S ribosomal subunit.

The protein resides in the plastid. It is found in the chloroplast. In terms of biological role, with S4 and S5 plays an important role in translational accuracy. Located at the interface of the 30S and 50S subunits. The polypeptide is Small ribosomal subunit protein uS12cz/uS12cy (rps12-A) (Gossypium barbadense (Sea Island cotton)).